The chain runs to 186 residues: Peptidyl-tRNA hydrolase (186 aa).

Tyrosine 14 contacts tRNA. The active-site Proton acceptor is the histidine 19. TRNA contacts are provided by phenylalanine 64, asparagine 66, and asparagine 112.

Belongs to the PTH family. As to quaternary structure, monomer.

Its subcellular location is the cytoplasm. The catalysed reaction is an N-acyl-L-alpha-aminoacyl-tRNA + H2O = an N-acyl-L-amino acid + a tRNA + H(+). Its function is as follows. Hydrolyzes ribosome-free peptidyl-tRNAs (with 1 or more amino acids incorporated), which drop off the ribosome during protein synthesis, or as a result of ribosome stalling. Functionally, catalyzes the release of premature peptidyl moieties from peptidyl-tRNA molecules trapped in stalled 50S ribosomal subunits, and thus maintains levels of free tRNAs and 50S ribosomes. In Listeria monocytogenes serotype 4a (strain HCC23), this protein is Peptidyl-tRNA hydrolase.